The primary structure comprises 334 residues: GTPase Obg (334 aa).

The Obg domain maps to 1-159; sequence MKFVDSASVR…REIGLELSVM (159 aa). The OBG-type G domain occupies 160 to 332; it reads ADIGLLGIPN…LVAGLFKLVL (173 aa). GTP contacts are provided by residues 166 to 173, 191 to 195, 212 to 215, 282 to 285, and 313 to 315; these read GIPNAGKS, FTTLH, DIPG, NKID, and SAL. Mg(2+)-binding residues include Ser173 and Thr193.

This sequence belongs to the TRAFAC class OBG-HflX-like GTPase superfamily. OBG GTPase family. As to quaternary structure, monomer. The cofactor is Mg(2+).

Its subcellular location is the cytoplasm. An essential GTPase which binds GTP, GDP and possibly (p)ppGpp with moderate affinity, with high nucleotide exchange rates and a fairly low GTP hydrolysis rate. Plays a role in control of the cell cycle, stress response, ribosome biogenesis and in those bacteria that undergo differentiation, in morphogenesis control. This Vesicomyosocius okutanii subsp. Calyptogena okutanii (strain HA) protein is GTPase Obg.